The primary structure comprises 33 residues: uncharacterized protein (33 aa).

This is an uncharacterized protein from Staphylococcus aureus (strain MW2).